The chain runs to 453 residues: Growth/differentiation factor 9 (453 aa).

A signal peptide spans 1-27; it reads MALPNKFFLWFCCFAWLCFPISLDSLP. A propeptide spanning residues 28 to 318 is cleaved from the precursor; the sequence is SRGEAQIVAR…EGVRSSRHRR (291 aa). N-linked (GlcNAc...) asparagine glycosylation is found at N163, N236, N255, and N269. The segment at 304-328 is disordered; that stretch reads GEEAAEGVRSSRHRRDQESASSELK. Over residues 318–328 the composition is skewed to basic and acidic residues; the sequence is RDQESASSELK. N337 carries an N-linked (GlcNAc...) asparagine glycan. 3 disulfides stabilise this stretch: C352–C418, C381–C450, and C385–C452.

Belongs to the TGF-beta family. Homodimer or heterodimer (Potential). But, in contrast to other members of this family, cannot be disulfide-linked. Post-translationally, phosphorylated; phosphorylation is critical for GDF9 function.

Its subcellular location is the secreted. Functionally, required for ovarian folliculogenesis. The sequence is that of Growth/differentiation factor 9 (GDF9) from Ovis aries (Sheep).